The chain runs to 368 residues: UPF0284 protein Cyan7425_0342 (368 aa).

The protein belongs to the UPF0284 family.

This is UPF0284 protein Cyan7425_0342 from Cyanothece sp. (strain PCC 7425 / ATCC 29141).